The following is a 293-amino-acid chain: Elongation factor Ts (293 aa).

The interval 80–83 is involved in Mg(2+) ion dislocation from EF-Tu; the sequence is TDFV.

This sequence belongs to the EF-Ts family.

It localises to the cytoplasm. Functionally, associates with the EF-Tu.GDP complex and induces the exchange of GDP to GTP. It remains bound to the aminoacyl-tRNA.EF-Tu.GTP complex up to the GTP hydrolysis stage on the ribosome. This chain is Elongation factor Ts, found in Staphylococcus aureus (strain Mu3 / ATCC 700698).